The chain runs to 527 residues: T-complex protein 1 subunit beta (527 aa).

Belongs to the TCP-1 chaperonin family. In terms of assembly, heterooligomeric complex of about 850 to 900 kDa that forms two stacked rings, 12 to 16 nm in diameter.

It localises to the cytoplasm. Functionally, molecular chaperone; assists the folding of proteins upon ATP hydrolysis. Known to play a role, in vitro, in the folding of actin and tubulin. The polypeptide is T-complex protein 1 subunit beta (Arabidopsis thaliana (Mouse-ear cress)).